Reading from the N-terminus, the 96-residue chain is Co-chaperonin GroES (96 aa).

This sequence belongs to the GroES chaperonin family. In terms of assembly, heptamer of 7 subunits arranged in a ring. Interacts with the chaperonin GroEL.

The protein resides in the cytoplasm. Together with the chaperonin GroEL, plays an essential role in assisting protein folding. The GroEL-GroES system forms a nano-cage that allows encapsulation of the non-native substrate proteins and provides a physical environment optimized to promote and accelerate protein folding. GroES binds to the apical surface of the GroEL ring, thereby capping the opening of the GroEL channel. The polypeptide is Co-chaperonin GroES (Acinetobacter baumannii (strain AB307-0294)).